Reading from the N-terminus, the 3843-residue chain is NBPF family member NBPF19 (3843 aa).

The stretch at 70–130 (MLRNERQFKE…RSLNEHLQAL (61 aa)) forms a coiled coil. Olduvai domains follow at residues 165–257 (ENDN…HIIP), 258–329 (ENES…VDIG), 330–421 (RHRW…PSCP), 424–479 (SREL…LDVD), 480–572 (RIKK…RSKK), 573–665 (ERRR…PSCP), 668–723 (SREL…LDVD), 724–816 (RIKK…RSKK), 817–909 (ERRR…PSCP), 912–967 (SREL…LDVD), 968–1060 (RIKK…RSKK), 1061–1153 (ERRR…PSCP), 1156–1211 (SREL…LDVD), 1212–1304 (RIKK…RSKK), 1305–1397 (ERRR…PSCP), 1400–1455 (SREL…LDVD), 1456–1548 (RIKK…RSKK), 1549–1641 (ERRR…PSCP), 1644–1699 (SREL…LDVD), 1700–1792 (RIKK…RSKK), 1793–1885 (ERRR…PSCP), 1888–1943 (SREL…LDVD), 1944–2036 (RIKK…RSKK), 2037–2129 (ERRR…PSCP), 2132–2187 (SREL…LDVD), 2188–2280 (RIKK…RSKK), 2281–2373 (ERRR…PSCP), 2376–2431 (SREL…LDVD), 2432–2524 (RIKK…RSKK), 2525–2617 (ERRR…PSCP), 2620–2675 (SREL…LDVD), 2676–2768 (RIKK…RSKK), 2769–2861 (ERRR…PSCP), 2864–2919 (SREL…LDVD), 2920–3012 (RIKK…RSKK), 3013–3105 (ERRR…PSCP), 3108–3163 (SREL…LDVD), 3164–3256 (RIKK…RSKK), 3257–3349 (ERRR…PSCP), 3352–3407 (SREL…LDVD), 3408–3500 (RIKK…RSKK), 3501–3593 (ERRR…PSCP), 3596–3651 (SREL…LDVD), 3652–3744 (RIKK…RSKK), and 3745–3843 (ERRR…IFPQ). Disordered stretches follow at residues 180 to 203 (EKVQ…PEDS) and 249 to 295 (WEDA…EGYS). Acidic residues-rich tracts occupy residues 259–268 (NESDDEEEEE) and 279–291 (ESEE…ESWD). The disordered stretch occupies residues 559-597 (KGKGKKRRGRRSKKERRRGRKEGEEDQNPPCPRLSRELL). A compositionally biased stretch (basic residues) spans 560 to 578 (GKGKKRRGRRSKKERRRGR). A disordered region spans residues 803-841 (KGKGKKRRGRRSKKERRRGRKEGEEDQNPPCPRLSRELL). Over residues 804 to 822 (GKGKKRRGRRSKKERRRGR) the composition is skewed to basic residues. Residues 1047–1085 (KGKGKKRRGRRSKKERRRGRKEGEEDQNPPCPRLSRELL) are disordered. Basic residues predominate over residues 1048 to 1066 (GKGKKRRGRRSKKERRRGR). The segment at 1291–1329 (KGKGKKRRGRRSKKERRRGRKEGEEDQNPPCPRLSRELL) is disordered. A compositionally biased stretch (basic residues) spans 1292–1310 (GKGKKRRGRRSKKERRRGR). The interval 1535–1573 (KGKGKKRRGRRSKKERRRGRKEGEEDQNPPCPRLSRELL) is disordered. Over residues 1536–1554 (GKGKKRRGRRSKKERRRGR) the composition is skewed to basic residues. A disordered region spans residues 1779–1817 (KGKGKKRRGRRSKKERRRGRKEGEEDQNPPCPRLSRELL). The segment covering 1780–1798 (GKGKKRRGRRSKKERRRGR) has biased composition (basic residues). The interval 2023–2061 (KGKGKKRRGRRSKKERRRGRKEGEEDQNPPCPRLSRELL) is disordered. The segment covering 2024-2042 (GKGKKRRGRRSKKERRRGR) has biased composition (basic residues). The segment at 2267–2305 (KGKGKKRRGRRSKKERRRGRKEGEEDQNPPCPRLSRELL) is disordered. Residues 2268–2286 (GKGKKRRGRRSKKERRRGR) are compositionally biased toward basic residues. The segment at 2511–2549 (KGKGKKRRGRRSKKERRRGRKEGEEDQNPPCPRLSRELL) is disordered. Over residues 2512 to 2530 (GKGKKRRGRRSKKERRRGR) the composition is skewed to basic residues. Positions 2755 to 2793 (KGKGKKRRGRRSKKERRRGRKEGEEDQNPPCPRLSRELL) are disordered. Over residues 2756–2774 (GKGKKRRGRRSKKERRRGR) the composition is skewed to basic residues. Residues 2999–3037 (KGKGKKRRGRRSKKERRRGRKEGEEDQNPPCPRLSRELL) form a disordered region. Over residues 3000 to 3018 (GKGKKRRGRRSKKERRRGR) the composition is skewed to basic residues. Residues 3243-3281 (KGKGKKRRGRRSKKERRRGRKEGEEDQNPPCPRLSRELL) are disordered. Basic residues predominate over residues 3244–3262 (GKGKKRRGRRSKKERRRGR). Residues 3487-3525 (KGKGKKRRGRRSKKERRRGRKEGEEDQNPPCPRLSRELL) are disordered. A compositionally biased stretch (basic residues) spans 3488-3506 (GKGKKRRGRRSKKERRRGR). Residues 3731–3764 (KGKGKKRRGRRSKKERRRGRKEGEEDQNPPCPRL) form a disordered region. The segment covering 3732–3750 (GKGKKRRGRRSKKERRRGR) has biased composition (basic residues).

It belongs to the NBPF family.

It is found in the cytoplasm. The polypeptide is NBPF family member NBPF19 (Homo sapiens (Human)).